The primary structure comprises 118 residues: Large ribosomal subunit protein bL20 (118 aa).

This sequence belongs to the bacterial ribosomal protein bL20 family.

In terms of biological role, binds directly to 23S ribosomal RNA and is necessary for the in vitro assembly process of the 50S ribosomal subunit. It is not involved in the protein synthesizing functions of that subunit. The protein is Large ribosomal subunit protein bL20 of Thermus thermophilus (strain ATCC BAA-163 / DSM 7039 / HB27).